A 97-amino-acid chain; its full sequence is Zinc metalloproteinase-disintegrin-like bothrojarin-4 (97 aa).

The Disintegrin domain occupies proline 4–asparagine 90. Ca(2+)-binding residues include valine 6, asparagine 9, phenylalanine 11, glutamate 13, glutamate 16, and aspartate 19. 7 disulfides stabilise this stretch: cysteine 7–cysteine 36, cysteine 18–cysteine 31, cysteine 20–cysteine 26, cysteine 30–cysteine 53, cysteine 44–cysteine 50, cysteine 49–cysteine 75, and cysteine 62–cysteine 82. Asparagine 32 is a glycosylation site (N-linked (GlcNAc...) asparagine). The short motif at lysine 68–aspartate 70 is the D/ECD-tripeptide; atypical (KCD) element.

It belongs to the venom metalloproteinase (M12B) family. P-III subfamily. P-IIIa sub-subfamily. As to quaternary structure, monomer. Zn(2+) serves as cofactor. As to expression, expressed by the venom gland.

The protein localises to the secreted. The hemorrhagic metalloproteinase-disintegrin-like bothrojarin-1 is a potent inhibitor of collagen-induced platelet aggregation by blockage of alpha-2/beta-1 (ITGA2/ITGB1) integrin. It does not present any fibrinogen-clotting activity. The chain is Zinc metalloproteinase-disintegrin-like bothrojarin-4 from Bothrops jararaca (Jararaca).